The following is a 124-amino-acid chain: Fluoride-specific ion channel FluC (124 aa).

4 helical membrane passes run 4–24 (LLLV…ISIF), 35–55 (FGTL…YALG), 60–80 (ISPE…TTFS), and 102–122 (VVLN…LVFS). Na(+) contacts are provided by glycine 74 and threonine 77.

Belongs to the fluoride channel Fluc/FEX (TC 1.A.43) family.

It is found in the cell inner membrane. It catalyses the reaction fluoride(in) = fluoride(out). Na(+) is not transported, but it plays an essential structural role and its presence is essential for fluoride channel function. Fluoride-specific ion channel. Important for reducing fluoride concentration in the cell, thus reducing its toxicity. This is Fluoride-specific ion channel FluC from Shewanella baltica (strain OS223).